The chain runs to 461 residues: Growth/differentiation factor 7 (461 aa).

An N-terminal signal peptide occupies residues 1–19 (MDLSAAAALCLWLLSACRP). A propeptide spanning residues 20 to 315 (RDGLEAAAVL…ANLGGRRRRR (296 aa)) is cleaved from the precursor. Asn79 carries N-linked (GlcNAc...) asparagine glycosylation. Positions 287–360 (LRAAAEPPPD…GHGRRGRSRC (74 aa)) are disordered. Residues 323 to 350 (GAQGSGGGGGGGGGGGGGGGGGGGGAGR) are compositionally biased toward gly residues. A compositionally biased stretch (basic residues) spans 351-360 (GHGRRGRSRC). Intrachain disulfides connect Cys360-Cys426, Cys389-Cys458, and Cys393-Cys460.

It belongs to the TGF-beta family. As to quaternary structure, homodimer; disulfide-linked.

The protein resides in the secreted. The sequence is that of Growth/differentiation factor 7 (Gdf7) from Mus musculus (Mouse).